The primary structure comprises 392 residues: tRNA-specific 2-thiouridylase MnmA (392 aa).

ATP is bound by residues 18–25 and M44; that span reads GMSGGVDS. An interaction with target base in tRNA region spans residues 104 to 106; the sequence is NPD. The Nucleophile role is filled by C109. The cysteines at positions 109 and 208 are disulfide-linked. An ATP-binding site is contributed by G133. The segment at 158 to 160 is interaction with tRNA; it reads KDQ. The active-site Cysteine persulfide intermediate is C208. Positions 320–321 are interaction with tRNA; that stretch reads RY.

This sequence belongs to the MnmA/TRMU family.

It is found in the cytoplasm. The catalysed reaction is S-sulfanyl-L-cysteinyl-[protein] + uridine(34) in tRNA + AH2 + ATP = 2-thiouridine(34) in tRNA + L-cysteinyl-[protein] + A + AMP + diphosphate + H(+). Its function is as follows. Catalyzes the 2-thiolation of uridine at the wobble position (U34) of tRNA, leading to the formation of s(2)U34. The polypeptide is tRNA-specific 2-thiouridylase MnmA (Marinobacter nauticus (strain ATCC 700491 / DSM 11845 / VT8) (Marinobacter aquaeolei)).